The following is a 130-amino-acid chain: Protein ApaG (130 aa).

The ApaG domain maps to Lys-3–Arg-127.

In Methylorubrum extorquens (strain CM4 / NCIMB 13688) (Methylobacterium extorquens), this protein is Protein ApaG.